The following is a 36-amino-acid chain: Cytochrome b6-f complex subunit 7 (36 aa).

A helical membrane pass occupies residues 5–25 (IFFVAGLVFVLTLVGMAIGFG).

This sequence belongs to the PetM family. The 4 large subunits of the cytochrome b6-f complex are cytochrome b6, subunit IV (17 kDa polypeptide, PetD), cytochrome f and the Rieske protein, while the 4 small subunits are PetG, PetL, PetM and PetN. The complex functions as a dimer.

Its subcellular location is the cell inner membrane. Its function is as follows. Component of the cytochrome b6-f complex, which mediates electron transfer between photosystem II (PSII) and photosystem I (PSI), cyclic electron flow around PSI, and state transitions. The chain is Cytochrome b6-f complex subunit 7 from Gloeobacter violaceus (strain ATCC 29082 / PCC 7421).